Consider the following 304-residue polypeptide: Porphobilinogen deaminase (304 aa).

Residue Cys-241 is modified to S-(dipyrrolylmethanemethyl)cysteine.

This sequence belongs to the HMBS family. As to quaternary structure, monomer. Dipyrromethane is required as a cofactor.

The catalysed reaction is 4 porphobilinogen + H2O = hydroxymethylbilane + 4 NH4(+). Its pathway is porphyrin-containing compound metabolism; protoporphyrin-IX biosynthesis; coproporphyrinogen-III from 5-aminolevulinate: step 2/4. Tetrapolymerization of the monopyrrole PBG into the hydroxymethylbilane pre-uroporphyrinogen in several discrete steps. This chain is Porphobilinogen deaminase, found in Ruthia magnifica subsp. Calyptogena magnifica.